A 121-amino-acid polypeptide reads, in one-letter code: Conopressin-conophysin (121 aa).

The first 20 residues, 1–20 (MGRLTMALCWLLLLLLTTQA), serve as a signal peptide directing secretion. A disulfide bond links C21 and C26. P27 bears the 4-hydroxyproline; partial; in Conopressin-ba1c mark. The residue at position 29 (G29) is a Glycine amide. Disulfide bonds link C43/C83, C46/C57, C51/C73, C58/C63, C90/C108, C102/C120, and C109/C114.

The protein belongs to the vasopressin/oxytocin family. In terms of tissue distribution, expressed by the venom duct.

The protein resides in the secreted. In Conus bayani (Bayan's cone), this protein is Conopressin-conophysin.